The following is a 462-amino-acid chain: uncharacterized protein (462 aa).

This is an uncharacterized protein from Acanthamoeba polyphaga (Amoeba).